The following is an 803-amino-acid chain: Bifunctional enzyme MurC/Ddl (803 aa).

The UDP-N-acetylmuramate--alanine ligase stretch occupies residues 1-446 (MMKSLFYHFI…GEKLRDFEPQ (446 aa)). ATP-binding positions include 111-117 (GSHGKTT) and 600-655 (VEAF…CKEI). The segment at 447–803 (KLHLGIICGG…SFVDQAFAIQ (357 aa)) is D-alanine--D-alanine ligase. The region spanning 567-778 (KRFMSDLGIP…YEQIVHQLVI (212 aa)) is the ATP-grasp domain. Residues aspartate 732, glutamate 745, and asparagine 747 each contribute to the Mg(2+) site.

This sequence in the N-terminal section; belongs to the MurCDEF family. In the C-terminal section; belongs to the D-alanine--D-alanine ligase family. It depends on Mg(2+) as a cofactor. Requires Mn(2+) as cofactor.

The protein resides in the cytoplasm. The catalysed reaction is UDP-N-acetyl-alpha-D-muramate + L-alanine + ATP = UDP-N-acetyl-alpha-D-muramoyl-L-alanine + ADP + phosphate + H(+). The enzyme catalyses 2 D-alanine + ATP = D-alanyl-D-alanine + ADP + phosphate + H(+). It participates in cell wall biogenesis; peptidoglycan biosynthesis. In terms of biological role, cell wall formation. This chain is Bifunctional enzyme MurC/Ddl (murC/ddl), found in Chlamydia trachomatis serovar D (strain ATCC VR-885 / DSM 19411 / UW-3/Cx).